A 135-amino-acid polypeptide reads, in one-letter code: RuBisCO chaperone RbcX (135 aa).

Residues 103-135 form a disordered region; it reads QHLERMTQVSLSHPSPESEQQQFSDPDWDNLAS. The span at 109 to 126 shows a compositional bias: polar residues; the sequence is TQVSLSHPSPESEQQQFS.

This sequence belongs to the RbcX family. In terms of assembly, homodimer. Interacts with the exposed C-terminal peptide of RbcL ('Glu-459-Asp-468'); binds 1 RbcL peptide per homodimer. Contacts a second RbcL monomer via its peripheral polar surface. A slightly longer RbcL peptide binds to RbcX2 with a higher affinity.

The protein localises to the carboxysome. It localises to the cytoplasm. An RbcL-specific chaperone. The central cleft of the RbcX homodimer (RbcX2) binds the C-terminus of an RbcL monomer, stabilizing the C-terminus and probably preventing its reassociation with chaperonin GroEL-ES. At the same time the peripheral region of RbcX2 binds a second RbcL monomer, bridging the RbcL homodimers in the correct orientation. The RbcX2(2)-bound RbcL dimers then assemble into the RbcL8 core (RbcL8-(RbcX2)8). RbcS binding triggers the release of RbcX2. In terms of biological role, required for optimal reconstitution of RuBisCO upon expression of rbcL-rbcS subunits in E.coli. This Anabaena sp. (strain CA / ATCC 33047) protein is RuBisCO chaperone RbcX.